A 271-amino-acid polypeptide reads, in one-letter code: MPRLAFLLRPGWLALALVVVAFTYLCFTVLAPWQLGKNAKTSRENQQIRYSLDTPPVPLKTLLPQQDSSAPDAQWRRVTATGQYLPDVQVLARLRVVEGDQAFEVLAPFVVDGGPTVLVDRGYVRPQVGSHVPPIPRLPVQTVTITARLRDSEPSVAGKDPFVRDGFQQVYSINTGQVAALTGVQLAGSYLQLIEDQPGGLGVLGVPHLDPGPFLSYGIQWISFGILAPIGLGYFAYAEIRARRREKAGSPPPDKPMTVEQKLADRYGRRR.

Helical transmembrane passes span 11-33 (GWLALALVVVAFTYLCFTVLAPW), 172-194 (SINTGQVAALTGVQLAGSYLQLI), and 214-236 (FLSYGIQWISFGILAPIGLGYFA). Positions 245–271 (REKAGSPPPDKPMTVEQKLADRYGRRR) are disordered. Over residues 262-271 (KLADRYGRRR) the composition is skewed to basic and acidic residues.

It belongs to the SURF1 family.

It localises to the cell membrane. This is an uncharacterized protein from Mycobacterium tuberculosis (strain CDC 1551 / Oshkosh).